The primary structure comprises 170 residues: Bifunctional protein PyrR (170 aa).

Residues 90–102 carry the PRPP-binding motif; that stretch reads LVLVDDVLMSGRT.

It belongs to the purine/pyrimidine phosphoribosyltransferase family. PyrR subfamily.

It carries out the reaction UMP + diphosphate = 5-phospho-alpha-D-ribose 1-diphosphate + uracil. Regulates the transcription of the pyrimidine nucleotide (pyr) operon in response to exogenous pyrimidines. Its function is as follows. Also displays a weak uracil phosphoribosyltransferase activity which is not physiologically significant. This Pseudomonas paraeruginosa (strain DSM 24068 / PA7) (Pseudomonas aeruginosa (strain PA7)) protein is Bifunctional protein PyrR.